Here is a 439-residue protein sequence, read N- to C-terminus: MFLHGTSRQNQHGHLEIGGVDALYLAEKYGTPLYVYDVALIRERAKSFKQAFISAGLKAQVAYASKAFSSVAMIQLAEEEGLSLDVVSGGELYTAVAAGFPAERIHFHGNNKSREELRMALEHRIGCIVVDNFYEIALLEDLCKETGHSIDVLLRITPGVEAHTHDYITTGQEDSKFGFDLHNGQTERAIEQVLQSEHIQLLGVHCHIGSQIFDTAGFVLAAEKIFKKLDEWRDSYSFVSKVLNLGGGFGIRYTEDDEPLHATEYVEKIIEAVKENASRYGFDIPEIWIEPGRSLVGDAGTTLYTVGSQKEVPGVRQYVAVDGGMNDNIRPALYQAKYEAAAANRIGEAHDKTVSIAGKCCESGDMLIWDIDLPEVKEGDLLAVFCTGAYGYSMANNYNRIPRPAVVFVENGEAHLVVKRETYEDIVKLDLPFKTGVKQ.

K66 carries the N6-(pyridoxal phosphate)lysine modification. Pyridoxal 5'-phosphate contacts are provided by residues G248 and 290–293 (EPGR). Positions 293, 330, and 334 each coordinate substrate. The active-site Proton donor is the C361. Substrate contacts are provided by E362 and Y390. Y390 contacts pyridoxal 5'-phosphate.

It belongs to the Orn/Lys/Arg decarboxylase class-II family. LysA subfamily. In terms of assembly, homodimer. It depends on pyridoxal 5'-phosphate as a cofactor.

The catalysed reaction is meso-2,6-diaminopimelate + H(+) = L-lysine + CO2. It functions in the pathway amino-acid biosynthesis; L-lysine biosynthesis via DAP pathway; L-lysine from DL-2,6-diaminopimelate: step 1/1. In terms of biological role, specifically catalyzes the decarboxylation of meso-diaminopimelate (meso-DAP) to L-lysine. In Bacillus subtilis (strain 168), this protein is Diaminopimelate decarboxylase.